The primary structure comprises 388 residues: Chorismate synthase (388 aa).

Arg39 and Arg45 together coordinate NADP(+). A disordered region spans residues 95 to 118 (EKNEKSRRVSRPRPGHADLVGGMK). FMN contacts are provided by residues 130-132 (RSS), 251-252 (NA), Gly296, 311-315 (KPIPT), and Arg337.

The protein belongs to the chorismate synthase family. Homotetramer. FMNH2 serves as cofactor.

It catalyses the reaction 5-O-(1-carboxyvinyl)-3-phosphoshikimate = chorismate + phosphate. It functions in the pathway metabolic intermediate biosynthesis; chorismate biosynthesis; chorismate from D-erythrose 4-phosphate and phosphoenolpyruvate: step 7/7. Its function is as follows. Catalyzes the anti-1,4-elimination of the C-3 phosphate and the C-6 proR hydrogen from 5-enolpyruvylshikimate-3-phosphate (EPSP) to yield chorismate, which is the branch point compound that serves as the starting substrate for the three terminal pathways of aromatic amino acid biosynthesis. This reaction introduces a second double bond into the aromatic ring system. The sequence is that of Chorismate synthase from Listeria monocytogenes serotype 4b (strain CLIP80459).